A 336-amino-acid chain; its full sequence is Putative transcription factor avaE (336 aa).

A DNA-binding region (WRKY) is located at residues 32–100 (TATRLNQTTF…VPLDQNESMP (69 aa)).

Its subcellular location is the nucleus. It functions in the pathway secondary metabolite biosynthesis. In terms of biological role, putative transcription factor; part of the cluster that mediates the biosynthesis of a highly modified cyclo-arginine-tryptophan dipeptide (cRW). This chain is Putative transcription factor avaE, found in Aspergillus versicolor.